The chain runs to 160 residues: Cyanate hydratase (160 aa).

Active-site residues include arginine 100, glutamate 103, and serine 126.

This sequence belongs to the cyanase family.

The catalysed reaction is cyanate + hydrogencarbonate + 3 H(+) = NH4(+) + 2 CO2. In terms of biological role, catalyzes the reaction of cyanate with bicarbonate to produce ammonia and carbon dioxide. This chain is Cyanate hydratase, found in Penicillium rubens (strain ATCC 28089 / DSM 1075 / NRRL 1951 / Wisconsin 54-1255) (Penicillium chrysogenum).